A 325-amino-acid chain; its full sequence is Methionyl-tRNA formyltransferase (325 aa).

113–116 (SLLP) lines the (6S)-5,6,7,8-tetrahydrofolate pocket.

The protein belongs to the Fmt family.

It carries out the reaction L-methionyl-tRNA(fMet) + (6R)-10-formyltetrahydrofolate = N-formyl-L-methionyl-tRNA(fMet) + (6S)-5,6,7,8-tetrahydrofolate + H(+). Functionally, attaches a formyl group to the free amino group of methionyl-tRNA(fMet). The formyl group appears to play a dual role in the initiator identity of N-formylmethionyl-tRNA by promoting its recognition by IF2 and preventing the misappropriation of this tRNA by the elongation apparatus. This is Methionyl-tRNA formyltransferase from Chromohalobacter salexigens (strain ATCC BAA-138 / DSM 3043 / CIP 106854 / NCIMB 13768 / 1H11).